A 152-amino-acid polypeptide reads, in one-letter code: Transcriptional regulator MraZ (152 aa).

SpoVT-AbrB domains lie at 7-54 (INSI…TMDE) and 83-126 (ASEM…SQEA).

This sequence belongs to the MraZ family. Forms oligomers.

It is found in the cytoplasm. The protein localises to the nucleoid. The chain is Transcriptional regulator MraZ from Hydrogenovibrio crunogenus (strain DSM 25203 / XCL-2) (Thiomicrospira crunogena).